We begin with the raw amino-acid sequence, 338 residues long: UPF0324 membrane protein HI_1643 (338 aa).

Transmembrane regions (helical) follow at residues 5 to 23, 33 to 55, 62 to 84, 94 to 116, 123 to 145, 155 to 177, 222 to 239, 254 to 273, 280 to 302, and 312 to 334; these read PFYF…ANYL, HISA…YPQF, GVLF…RLTF, AVVT…GIRY, LVYL…AEPV, VAIA…FYTW, LRVM…WLLT, IPWF…FDLL, LFVE…TTQA, and PLVL…NYGI.

The protein belongs to the UPF0324 family.

The protein localises to the cell membrane. This chain is UPF0324 membrane protein HI_1643, found in Haemophilus influenzae (strain ATCC 51907 / DSM 11121 / KW20 / Rd).